A 257-amino-acid chain; its full sequence is Imidazole glycerol phosphate synthase subunit HisF (257 aa).

Residues D11 and D130 contribute to the active site.

This sequence belongs to the HisA/HisF family. As to quaternary structure, heterodimer of HisH and HisF.

The protein localises to the cytoplasm. The enzyme catalyses 5-[(5-phospho-1-deoxy-D-ribulos-1-ylimino)methylamino]-1-(5-phospho-beta-D-ribosyl)imidazole-4-carboxamide + L-glutamine = D-erythro-1-(imidazol-4-yl)glycerol 3-phosphate + 5-amino-1-(5-phospho-beta-D-ribosyl)imidazole-4-carboxamide + L-glutamate + H(+). It participates in amino-acid biosynthesis; L-histidine biosynthesis; L-histidine from 5-phospho-alpha-D-ribose 1-diphosphate: step 5/9. In terms of biological role, IGPS catalyzes the conversion of PRFAR and glutamine to IGP, AICAR and glutamate. The HisF subunit catalyzes the cyclization activity that produces IGP and AICAR from PRFAR using the ammonia provided by the HisH subunit. The sequence is that of Imidazole glycerol phosphate synthase subunit HisF from Shewanella denitrificans (strain OS217 / ATCC BAA-1090 / DSM 15013).